A 242-amino-acid chain; its full sequence is Tryptophan synthase alpha chain (242 aa).

Catalysis depends on proton acceptor residues glutamate 31 and aspartate 42.

This sequence belongs to the TrpA family. In terms of assembly, tetramer of two alpha and two beta chains.

It carries out the reaction (1S,2R)-1-C-(indol-3-yl)glycerol 3-phosphate + L-serine = D-glyceraldehyde 3-phosphate + L-tryptophan + H2O. The protein operates within amino-acid biosynthesis; L-tryptophan biosynthesis; L-tryptophan from chorismate: step 5/5. The alpha subunit is responsible for the aldol cleavage of indoleglycerol phosphate to indole and glyceraldehyde 3-phosphate. The sequence is that of Tryptophan synthase alpha chain from Staphylococcus aureus (strain USA300).